The sequence spans 229 residues: Ribonuclease 3 (229 aa).

The RNase III domain occupies 5 to 127; the sequence is LSRLERQLGY…LIGAIYLDAG (123 aa). Position 40 (Glu-40) interacts with Mg(2+). Asp-44 is a catalytic residue. Residues Asp-113 and Glu-116 each coordinate Mg(2+). The active site involves Glu-116. The region spanning 154–224 is the DRBM domain; it reads DPKTRLQEFL…AAAALIALGV (71 aa).

Belongs to the ribonuclease III family. In terms of assembly, homodimer. Requires Mg(2+) as cofactor.

Its subcellular location is the cytoplasm. It carries out the reaction Endonucleolytic cleavage to 5'-phosphomonoester.. Functionally, digests double-stranded RNA. Involved in the processing of primary rRNA transcript to yield the immediate precursors to the large and small rRNAs (23S and 16S). Processes some mRNAs, and tRNAs when they are encoded in the rRNA operon. Processes pre-crRNA and tracrRNA of type II CRISPR loci if present in the organism. The polypeptide is Ribonuclease 3 (Pseudomonas syringae pv. syringae (strain B728a)).